The chain runs to 102 residues: Small ribosomal subunit protein uS10 (102 aa).

The protein belongs to the universal ribosomal protein uS10 family. Part of the 30S ribosomal subunit.

Involved in the binding of tRNA to the ribosomes. This is Small ribosomal subunit protein uS10 from Citrifermentans bemidjiense (strain ATCC BAA-1014 / DSM 16622 / JCM 12645 / Bem) (Geobacter bemidjiensis).